The sequence spans 45 residues: U1-ctenitoxin-Pk1a (45 aa).

Disulfide bonds link Cys3–Cys16, Cys10–Cys25, Cys15–Cys34, and Cys27–Cys32.

As to expression, expressed by the venom gland.

The protein resides in the secreted. Neurotoxin. Causes rapid general flaccid paralysis and death in mice at dose levels of 5 ug per mouse. In Phoneutria keyserlingi (Brazilian wandering spider), this protein is U1-ctenitoxin-Pk1a.